We begin with the raw amino-acid sequence, 250 residues long: PHD finger protein ALFIN-LIKE 3 (250 aa).

At Met-1 the chain carries N-acetylmethionine. Positions 146 to 192 (DKSSAANQNGNKSKSNSKVRTSEGKSSKTKQPKEEDEEIDEDDEDDH) are disordered. Positions 149–163 (SAANQNGNKSKSNSK) are enriched in low complexity. Residues 179-192 (EEDEEIDEDDEDDH) show a composition bias toward acidic residues. The PHD-type zinc finger occupies 194-246 (ETLCGACGDSDGADEFWICCDLCEKWFHGKCVKITPARAEHIKQYKCPSCSNK).

It belongs to the Alfin family. Ubiquitously expressed.

The protein localises to the nucleus. Histone-binding component that specifically recognizes H3 tails trimethylated on 'Lys-4' (H3K4me3), which mark transcription start sites of virtually all active genes. This is PHD finger protein ALFIN-LIKE 3 (AL3) from Arabidopsis thaliana (Mouse-ear cress).